A 340-amino-acid polypeptide reads, in one-letter code: Myomesin-1 (340 aa).

Residues 177-212 form a disordered region; sequence AEKARLKSRPSAPXTGQIIVTEEEPSEEAGTENXQR. The segment covering 197 to 206 has biased composition (acidic residues); sequence TEEEPSEEAG.

As to quaternary structure, homodimer. Interacts with TTN/titin and PNKD. Seems to be expressed in all cardiac and skeletal fibers.

The protein localises to the cytoplasm. Its subcellular location is the myofibril. It localises to the sarcomere. It is found in the m line. Its function is as follows. Major component of the vertebrate myofibrillar M band. Binds myosin, titin, and light meromyosin. This binding is dose dependent. The sequence is that of Myomesin-1 (MYOM1) from Bos taurus (Bovine).